The primary structure comprises 484 residues: Protein nucleotidyltransferase YdiU (484 aa).

Residues Gly81, Gly83, Arg84, Lys103, Asp115, Gly116, Arg166, and Arg173 each contribute to the ATP site. The active-site Proton acceptor is Asp244. Mg(2+) is bound by residues Asn245 and Asp254. ATP is bound at residue Asp254.

This sequence belongs to the SELO family. The cofactor is Mg(2+). Requires Mn(2+) as cofactor.

The enzyme catalyses L-seryl-[protein] + ATP = 3-O-(5'-adenylyl)-L-seryl-[protein] + diphosphate. It carries out the reaction L-threonyl-[protein] + ATP = 3-O-(5'-adenylyl)-L-threonyl-[protein] + diphosphate. The catalysed reaction is L-tyrosyl-[protein] + ATP = O-(5'-adenylyl)-L-tyrosyl-[protein] + diphosphate. It catalyses the reaction L-histidyl-[protein] + UTP = N(tele)-(5'-uridylyl)-L-histidyl-[protein] + diphosphate. The enzyme catalyses L-seryl-[protein] + UTP = O-(5'-uridylyl)-L-seryl-[protein] + diphosphate. It carries out the reaction L-tyrosyl-[protein] + UTP = O-(5'-uridylyl)-L-tyrosyl-[protein] + diphosphate. Nucleotidyltransferase involved in the post-translational modification of proteins. It can catalyze the addition of adenosine monophosphate (AMP) or uridine monophosphate (UMP) to a protein, resulting in modifications known as AMPylation and UMPylation. This Shewanella loihica (strain ATCC BAA-1088 / PV-4) protein is Protein nucleotidyltransferase YdiU.